The following is a 23-amino-acid chain: Phospholipase A1 verutoxin-1 (23 aa).

The protein belongs to the AB hydrolase superfamily. Lipase family. In terms of processing, contains six disulfide bonds. In terms of tissue distribution, expressed by the venom gland.

The protein localises to the secreted. The enzyme catalyses a 1,2-diacyl-sn-glycero-3-phosphocholine + H2O = a 2-acyl-sn-glycero-3-phosphocholine + a fatty acid + H(+). It carries out the reaction 1-(9Z-octadecenoyl)-2-hexadecanoyl-sn-glycero-3-phosphocholine + H2O = 2-hexadecanoyl-sn-glycero-3-phosphocholine + (9Z)-octadecenoate + H(+). The catalysed reaction is a 1-acyl-sn-glycero-3-phosphocholine + H2O = sn-glycerol 3-phosphocholine + a fatty acid + H(+). It participates in phospholipid metabolism. Activity is maximal in the presence of calcium. However, unlike phospholipases A2 whose catalytic activity is strictly calcium-dependent, this enzyme shows considerable catalytic activity on phosphatidylcholine emulsified in calcium free solution; the catalytic activity of VT-1 assayed in the absence of calcium ions is 18-20% of that assayed in solution containing calcium ions. Functionally, catalyzes the hydrolysis of glycerophospholipids such as phosphatidylcholine (1,2-diacyl-sn-glycero-3-phosphocholine) and has a moderate activity to hydrolyze lysoglycerophospholipids such as lysophosphatidylcholine (1-acyl-sn-glycero-3-phosphocholine), but is unable to hydrolyze sphingomyelin. Liberates the fatty acid from the sn-1 position of 1,2-diacyl-sn-glycero-3-phosphocholine mainly, indicating phospholipase activity of the A1 type. In addition to acting as an allergen, it possesses a moderate hemolytic activity on red blood cells of mice (3% of hemolysis at 3.0 ug/ml). The sequence is that of Phospholipase A1 verutoxin-1 from Vespa velutina (Asian yellow-legged hornet).